A 95-amino-acid polypeptide reads, in one-letter code: uncharacterized protein (95 aa).

An N-terminal signal peptide occupies residues 1-22 (MLPGFTMIITSLLLTFFREVEH). Residues 23-52 (LLPECLTITNTPQRTLVLIQRFTLLQKVMT) are Extracellular-facing. A helical transmembrane segment spans residues 53–69 (IHLLLSIGTLGSLFTLH). Topologically, residues 70–95 (PQLLKTNLLQKLHKELNSNLDYLISC) are cytoplasmic.

It localises to the host membrane. This is an uncharacterized protein from Acidianus bottle-shaped virus (isolate Italy/Pozzuoli) (ABV).